The chain runs to 276 residues: Large ribosomal subunit protein uL2 (276 aa).

2 disordered regions span residues 14-58 and 221-276; these read RNAS…GGGH and TRGE…KNRK. Polar residues predominate over residues 16-27; sequence ASVSDFSELTRS. Residues 255–276 are compositionally biased toward basic residues; that stretch reads RRPKKASNKMIVRRRPSGKNRK.

This sequence belongs to the universal ribosomal protein uL2 family. Part of the 50S ribosomal subunit. Forms a bridge to the 30S subunit in the 70S ribosome.

Its function is as follows. One of the primary rRNA binding proteins. Required for association of the 30S and 50S subunits to form the 70S ribosome, for tRNA binding and peptide bond formation. It has been suggested to have peptidyltransferase activity; this is somewhat controversial. Makes several contacts with the 16S rRNA in the 70S ribosome. The protein is Large ribosomal subunit protein uL2 of Bifidobacterium longum subsp. infantis (strain ATCC 15697 / DSM 20088 / JCM 1222 / NCTC 11817 / S12).